The following is a 418-amino-acid chain: ATP-dependent Clp protease ATP-binding subunit ClpX (418 aa).

The ClpX-type ZB domain maps to 1-54; the sequence is MTRKDDESDQFFCSFCGKNQKEVKKLIAGPSVYICNECVSLCEEIIEDEDKESL. Zn(2+)-binding residues include Cys13, Cys16, Cys35, and Cys38. Position 120–127 (120–127) interacts with ATP; the sequence is PTGCGKTL.

Belongs to the ClpX chaperone family. As to quaternary structure, component of the ClpX-ClpP complex. Forms a hexameric ring that, in the presence of ATP, binds to fourteen ClpP subunits assembled into a disk-like structure with a central cavity, resembling the structure of eukaryotic proteasomes.

Functionally, ATP-dependent specificity component of the Clp protease. It directs the protease to specific substrates. Can perform chaperone functions in the absence of ClpP. This chain is ATP-dependent Clp protease ATP-binding subunit ClpX, found in Desulforapulum autotrophicum (strain ATCC 43914 / DSM 3382 / VKM B-1955 / HRM2) (Desulfobacterium autotrophicum).